The following is a 287-amino-acid chain: Ribonuclease Z (287 aa).

7 residues coordinate Zn(2+): His64, His66, Asp68, His69, His124, Asp191, and His250. Catalysis depends on Asp68, which acts as the Proton acceptor.

It belongs to the RNase Z family. As to quaternary structure, homodimer. Zn(2+) serves as cofactor.

It catalyses the reaction Endonucleolytic cleavage of RNA, removing extra 3' nucleotides from tRNA precursor, generating 3' termini of tRNAs. A 3'-hydroxy group is left at the tRNA terminus and a 5'-phosphoryl group is left at the trailer molecule.. Functionally, zinc phosphodiesterase, which displays some tRNA 3'-processing endonuclease activity. Probably involved in tRNA maturation, by removing a 3'-trailer from precursor tRNA. The polypeptide is Ribonuclease Z (Pyrobaculum calidifontis (strain DSM 21063 / JCM 11548 / VA1)).